The primary structure comprises 329 residues: 2,3,4,5-tetrahydropyridine-2,6-dicarboxylate N-succinyltransferase (329 aa).

Residues Asp-177 and Glu-194 each coordinate Mg(2+). The active-site Acyl-anhydride intermediate is Glu-210. Succinyl-CoA-binding positions include Arg-212, Gly-227, Ser-230, Ala-253, 268–269, Gly-276, Lys-288, and 301–304; these read EA and RRNS.

Belongs to the type 2 tetrahydrodipicolinate N-succinyltransferase family. In terms of assembly, homotrimer.

The protein resides in the cytoplasm. The catalysed reaction is (S)-2,3,4,5-tetrahydrodipicolinate + succinyl-CoA + H2O = (S)-2-succinylamino-6-oxoheptanedioate + CoA. The protein operates within amino-acid biosynthesis; L-lysine biosynthesis via DAP pathway; LL-2,6-diaminopimelate from (S)-tetrahydrodipicolinate (succinylase route): step 1/3. Its function is as follows. Catalyzes the conversion of the cyclic tetrahydrodipicolinate (THDP) into the acyclic N-succinyl-L-2-amino-6-oxopimelate using succinyl-CoA. The protein is 2,3,4,5-tetrahydropyridine-2,6-dicarboxylate N-succinyltransferase of Streptomyces coelicolor (strain ATCC BAA-471 / A3(2) / M145).